We begin with the raw amino-acid sequence, 206 residues long: Large ribosomal subunit protein mL40 (206 aa).

The transit peptide at 1-46 (MATGVMLCAARALRPRSWIPGTCQAHVRHTHQRASLLAFWDLIPMR) directs the protein to the mitochondrion. The disordered stretch occupies residues 170–189 (PFEKEGPHYTPPISNYQAPE).

It belongs to the mitochondrion-specific ribosomal protein mL40 family. In terms of assembly, component of the mitochondrial ribosome large subunit (39S) which comprises a 16S rRNA and about 50 distinct proteins. In terms of tissue distribution, ubiquitous.

It localises to the mitochondrion. This chain is Large ribosomal subunit protein mL40 (Mrpl40), found in Mus musculus (Mouse).